The sequence spans 249 residues: 3-deoxy-manno-octulosonate cytidylyltransferase (249 aa).

The protein belongs to the KdsB family.

The protein resides in the cytoplasm. It catalyses the reaction 3-deoxy-alpha-D-manno-oct-2-ulosonate + CTP = CMP-3-deoxy-beta-D-manno-octulosonate + diphosphate. It functions in the pathway nucleotide-sugar biosynthesis; CMP-3-deoxy-D-manno-octulosonate biosynthesis; CMP-3-deoxy-D-manno-octulosonate from 3-deoxy-D-manno-octulosonate and CTP: step 1/1. It participates in bacterial outer membrane biogenesis; lipopolysaccharide biosynthesis. Its function is as follows. Activates KDO (a required 8-carbon sugar) for incorporation into bacterial lipopolysaccharide in Gram-negative bacteria. This chain is 3-deoxy-manno-octulosonate cytidylyltransferase, found in Aliivibrio salmonicida (strain LFI1238) (Vibrio salmonicida (strain LFI1238)).